The sequence spans 185 residues: Anaphase-promoting complex subunit 10 (185 aa).

T2 is modified (N-acetylthreonine). Positions 2-185 (TTPNKTPPGA…IDFMMYRSIR (184 aa)) constitute a DOC domain. An N6-acetyllysine modification is found at K169.

It belongs to the APC10 family. As to quaternary structure, the mammalian APC/C is composed at least of 14 distinct subunits ANAPC1, ANAPC2, CDC27/APC3, ANAPC4, ANAPC5, CDC16/APC6, ANAPC7, CDC23/APC8, ANAPC10, ANAPC11, CDC26/APC12, ANAPC13, ANAPC15 and ANAPC16 that assemble into a complex of at least 19 chains with a combined molecular mass of around 1.2 MDa; APC/C interacts with FZR1 and FBXO5. The C-terminus of APC10 binds to CDC27/APC3. Interacts with PIWIL1; interaction only takes place when PIWIL1 binds piRNA. Interacts with FBXO43; the interaction is direct.

The protein operates within protein modification; protein ubiquitination. Functionally, component of the anaphase promoting complex/cyclosome (APC/C), a cell cycle-regulated E3 ubiquitin ligase that controls progression through mitosis and the G1 phase of the cell cycle. The APC/C complex acts by mediating ubiquitination and subsequent degradation of target proteins: it mainly mediates the formation of 'Lys-11'-linked polyubiquitin chains and, to a lower extent, the formation of 'Lys-48'- and 'Lys-63'-linked polyubiquitin chains. The APC/C complex catalyzes assembly of branched 'Lys-11'-/'Lys-48'-linked branched ubiquitin chains on target proteins. This Mus musculus (Mouse) protein is Anaphase-promoting complex subunit 10 (Anapc10).